Reading from the N-terminus, the 1139-residue chain is MPSGGDQSPPPPPPPPAAAASDEEEEDDGEAEDAAPPAESPTPQIQQRFDELCSRLNMDEAARAEAWDSYRSMSESYTLEGNDLHWLACALYVACRKSVPTVSKGTVEGNYVSLTRILKCSEQSLIEFFNKMKKWEDMANLPPHFRERTERLERNFTVSAVIFKKYEPIFQDIFKYPQEEQPRQQRGRKQRRQPCTVSEIFHFCWVLFIYAKGNFPMISDDLVNSYHLLLCALDLVYGNALQCSNRKELVNPNFKGLSEDFHAKDSKPSSDPPCIIEKLCSLHDGLVLEAKGIKEHFWKPYIRKLYEKKLLKGKEENLTGFLEPGNFGESFKAINKAYEEYVLSVGNLDERIFLGEDAEEEIGTLSRCLNAGSGTETAERVQMKNILQQHFDKSKALRISTPLTGVRYIKENSPCVTPVSTATHSLSRLHTMLTGLRNAPSEKLEQILRTCSRDPTQAIANRLKEMFEIYSQHFQPDEDFSNCAKEIASKHFRFAEMLYYKVLESVIEQEQKRLGDMDLSGILEQDAFHRSLLACCLEVVTFSYKPPGNFPFITEIFDVPLYHFYKVIEVFIRAEDGLCREVVKHLNQIEEQILDHLAWKPESPLWEKIRDNENRVPTCEEVMPPQNLERADEICIAGSPLTPRRVTEVRADTGGLGRSITSPTTLYDRYSSPPASTTRRRLFVENDSPSDGGTPGRMPPQPLVNAVPVQNVSGETVSVTPVPGQTLVTMATATVTANNGQTVTIPVQGIANENGGITFFPVQVNVGGQAQAVTGSIQPLSAQALAGSLSSQQVTGTTLQVPGQVAIQQISPGGQQQKQGQSVTSSSNRPRKTSSLSLFFRKVYHLAAVRLRDLCAKLDISDELRKKIWTCFEFSIIQCPELMMDRHLDQLLMCAIYVMAKVTKEDKSFQNIMRCYRTQPQARSQVYRSVLIKGKRKRRNSGSSDSRSHQNSPTELNKDRTSRDSSPVMRSSSTLPVPQPSSAPPTPTRLTGANSDMEEEERGDLIQFYNNIYIKQIKTFAMKYSQANMDAPPLSPYPFVRTGSPRRIQLSQNHPVYISPHKNETMLSPREKIFYYFSNSPSKRLREINSMIRTGETPTKKRGILLEDGSESPAKRICPENHSALLRRLQDVANDRGSH.

The segment at 1–45 (MPSGGDQSPPPPPPPPAAAASDEEEEDDGEAEDAAPPAESPTPQI) is disordered. The segment covering 8 to 17 (SPPPPPPPPA) has biased composition (pro residues). Residues 21 to 33 (SDEEEEDDGEAED) show a composition bias toward acidic residues. Position 413 is a phosphoserine (Ser-413). Thr-417 bears the Phosphothreonine mark. The domain A stretch occupies residues 417-616 (TPVSTATHSL…EKIRDNENRV (200 aa)). The tract at residues 417–1024 (TPVSTATHSL…KQIKTFAMKY (608 aa)) is pocket; binds E1A. An O-linked (GlcNAc) serine glycan is attached at Ser-420. The interval 617-827 (PTCEEVMPPQ…KQGQSVTSSS (211 aa)) is spacer. Residue Ser-639 is modified to Phosphoserine. Position 642 is a phosphothreonine (Thr-642). Residues 654 to 678 (GGLGRSITSPTTLYDRYSSPPASTT) form a disordered region. Phosphoserine occurs at positions 662, 672, and 688. The span at 810-827 (ISPGGQQQKQGQSVTSSS) shows a compositional bias: low complexity. Disordered regions lie at residues 810 to 831 (ISPG…NRPR) and 933 to 999 (KGKR…DMEE). A domain B region spans residues 828-1024 (NRPRKTSSLS…KQIKTFAMKY (197 aa)). Residues 941-955 (SGSSDSRSHQNSPTE) show a composition bias toward polar residues. 6 positions are modified to phosphoserine: Ser-948, Ser-952, Ser-966, Ser-971, Ser-972, and Ser-973. Residues 964–973 (DSSPVMRSSS) show a composition bias toward low complexity. Thr-974 carries the phosphothreonine modification. Residues 977 to 987 (VPQPSSAPPTP) show a composition bias toward pro residues. Phosphoserine occurs at positions 981 and 982. Thr-986 is modified (phosphothreonine). A phosphoserine mark is found at Ser-1035, Ser-1068, Ser-1080, and Ser-1112.

The protein belongs to the retinoblastoma protein (RB) family. In terms of assembly, interacts with AATF. Interacts with KMT5B, KMT5C and USP4. Component of the DREAM complex (also named LINC complex) at least composed of E2F4, E2F5, LIN9, LIN37, LIN52, LIN54, MYBL1, MYBL2, RBL1, RBL2, RBBP4, TFDP1 and TFDP2. The complex exists in quiescent cells where it represses cell cycle-dependent genes. It dissociates in S phase when LIN9, LIN37, LIN52 and LIN54 form a subcomplex that binds to MYBL2. Interacts with RINT1. Interacts with PML (isoform PML-1, isoform PML-2, isoform PML-3, isoform PML-4 and isoform PML-5). Interacts with RBBP9. Interacts with CD53. As to quaternary structure, (Microbial infection) Interacts with JC virus small t antigen. Post-translationally, during G0 and early G1 phase of the cell cycle, phosphorylated on Ser-639 and on 5 sites within the domain B. Phosphorylation on Ser-672 in G1 leads to its ubiquitin-dependent proteolysis.

It is found in the nucleus. Functionally, key regulator of entry into cell division. Directly involved in heterochromatin formation by maintaining overall chromatin structure and, in particular, that of constitutive heterochromatin by stabilizing histone methylation. Recruits and targets histone methyltransferases KMT5B and KMT5C, leading to epigenetic transcriptional repression. Controls histone H4 'Lys-20' trimethylation. Probably acts as a transcription repressor by recruiting chromatin-modifying enzymes to promoters. Potent inhibitor of E2F-mediated trans-activation, associates preferentially with E2F5. Binds to cyclins A and E. Binds to and may be involved in the transforming capacity of the adenovirus E1A protein. May act as a tumor suppressor. This is Retinoblastoma-like protein 2 (RBL2) from Homo sapiens (Human).